The following is a 252-amino-acid chain: 2-succinyl-6-hydroxy-2,4-cyclohexadiene-1-carboxylate synthase (252 aa).

It belongs to the AB hydrolase superfamily. MenH family. In terms of assembly, monomer.

It catalyses the reaction 5-enolpyruvoyl-6-hydroxy-2-succinyl-cyclohex-3-ene-1-carboxylate = (1R,6R)-6-hydroxy-2-succinyl-cyclohexa-2,4-diene-1-carboxylate + pyruvate. It participates in quinol/quinone metabolism; 1,4-dihydroxy-2-naphthoate biosynthesis; 1,4-dihydroxy-2-naphthoate from chorismate: step 3/7. The protein operates within quinol/quinone metabolism; menaquinone biosynthesis. Functionally, catalyzes a proton abstraction reaction that results in 2,5-elimination of pyruvate from 2-succinyl-5-enolpyruvyl-6-hydroxy-3-cyclohexene-1-carboxylate (SEPHCHC) and the formation of 2-succinyl-6-hydroxy-2,4-cyclohexadiene-1-carboxylate (SHCHC). This is 2-succinyl-6-hydroxy-2,4-cyclohexadiene-1-carboxylate synthase from Salmonella typhimurium (strain LT2 / SGSC1412 / ATCC 700720).